The chain runs to 391 residues: N-acetylaspartylglutamate synthase A (391 aa).

One can recognise an ATP-grasp domain in the interval 115–300 (FQELAGHGVP…VGGIIADYTM (186 aa)). ATP is bound by residues K154, 189–199 (QKYVKESHGKD), and R215. D260, E273, and N275 together coordinate Mg(2+). Mn(2+)-binding residues include D260, E273, and N275. S319 is subject to Phosphoserine. The segment covering 341–350 (TINSGSTSSE) has biased composition (polar residues). Residues 341 to 379 (TINSGSTSSESEPELGEIRDSSASTMGAPPSMLPEPGYN) form a disordered region.

It belongs to the RimK family. It depends on Mg(2+) as a cofactor. The cofactor is Mn(2+).

The protein resides in the cytoplasm. The catalysed reaction is N-acetyl-L-aspartate + L-glutamate + ATP = N-acetyl-L-aspartyl-L-glutamate + ADP + phosphate + H(+). It catalyses the reaction N-acetyl-L-aspartate + 2 L-glutamate + 2 ATP = N-acetyl-L-aspartyl-L-glutamyl-L-glutamate + 2 ADP + 2 phosphate + 2 H(+). Functionally, catalyzes the synthesis of N-acetyl-L-aspartyl-L-glutamate (NAAG) and N-acetyl-L-aspartyl-L-glutamyl-L-glutamate. This is N-acetylaspartylglutamate synthase A (RIMKLA) from Homo sapiens (Human).